The following is a 319-amino-acid chain: Probable cytochrome c oxidase subunit 2 (319 aa).

The N-terminal stretch at 1–33 (MSPNGSDRSPRRPMRRKLLQALTAGLVLATATG) is a signal peptide. The next 2 helical transmembrane spans lie at 63–83 (WAAA…SVFF) and 101–121 (LPIE…LFYF). Positions 227, 262, 266, and 270 each coordinate Cu cation.

The protein belongs to the cytochrome c oxidase subunit 2 family. Cu cation is required as a cofactor. The cofactor is heme.

Its subcellular location is the cell membrane. The enzyme catalyses 4 Fe(II)-[cytochrome c] + O2 + 8 H(+)(in) = 4 Fe(III)-[cytochrome c] + 2 H2O + 4 H(+)(out). Functionally, subunits I and II form the functional core of the enzyme complex. Electrons originating in cytochrome c are transferred via heme a and Cu(A) to the binuclear center formed by heme a3 and Cu(B). The sequence is that of Probable cytochrome c oxidase subunit 2 (ctaC) from Streptomyces coelicolor (strain ATCC BAA-471 / A3(2) / M145).